The chain runs to 283 residues: Bifunctional protein FolD (283 aa).

NADP(+) is bound by residues 166–168 (GQS), serine 191, and isoleucine 232.

This sequence belongs to the tetrahydrofolate dehydrogenase/cyclohydrolase family. In terms of assembly, homodimer.

It catalyses the reaction (6R)-5,10-methylene-5,6,7,8-tetrahydrofolate + NADP(+) = (6R)-5,10-methenyltetrahydrofolate + NADPH. The catalysed reaction is (6R)-5,10-methenyltetrahydrofolate + H2O = (6R)-10-formyltetrahydrofolate + H(+). Its pathway is one-carbon metabolism; tetrahydrofolate interconversion. In terms of biological role, catalyzes the oxidation of 5,10-methylenetetrahydrofolate to 5,10-methenyltetrahydrofolate and then the hydrolysis of 5,10-methenyltetrahydrofolate to 10-formyltetrahydrofolate. In Laribacter hongkongensis (strain HLHK9), this protein is Bifunctional protein FolD.